The chain runs to 237 residues: 1-(5-phosphoribosyl)-5-[(5-phosphoribosylamino)methylideneamino] imidazole-4-carboxamide isomerase (237 aa).

Asp-8 functions as the Proton acceptor in the catalytic mechanism. Asp-129 (proton donor) is an active-site residue.

This sequence belongs to the HisA/HisF family.

The protein localises to the cytoplasm. It carries out the reaction 1-(5-phospho-beta-D-ribosyl)-5-[(5-phospho-beta-D-ribosylamino)methylideneamino]imidazole-4-carboxamide = 5-[(5-phospho-1-deoxy-D-ribulos-1-ylimino)methylamino]-1-(5-phospho-beta-D-ribosyl)imidazole-4-carboxamide. It participates in amino-acid biosynthesis; L-histidine biosynthesis; L-histidine from 5-phospho-alpha-D-ribose 1-diphosphate: step 4/9. In Acetivibrio thermocellus (strain ATCC 27405 / DSM 1237 / JCM 9322 / NBRC 103400 / NCIMB 10682 / NRRL B-4536 / VPI 7372) (Clostridium thermocellum), this protein is 1-(5-phosphoribosyl)-5-[(5-phosphoribosylamino)methylideneamino] imidazole-4-carboxamide isomerase.